Consider the following 358-residue polypeptide: Ion-translocating oxidoreductase complex subunit D (358 aa).

The next 4 membrane-spanning stretches (helical) occupy residues 19–39 (IMLW…YYFG), 41–61 (GVVL…FIAI), 79–99 (LTAL…IIII), and 125–145 (IGYV…MPPI). Threonine 186 is subject to FMN phosphoryl threonine. 5 helical membrane passes run 220–240 (FAQG…FLIL), 248–268 (IPVA…FTGF), 271–291 (LSAI…FIAT), 297–317 (SITP…VYLI), and 321–341 (GNYP…VPLI).

It belongs to the NqrB/RnfD family. As to quaternary structure, the complex is composed of six subunits: RnfA, RnfB, RnfC, RnfD, RnfE and RnfG. It depends on FMN as a cofactor.

It localises to the cell inner membrane. Part of a membrane-bound complex that couples electron transfer with translocation of ions across the membrane. The chain is Ion-translocating oxidoreductase complex subunit D from Haemophilus influenzae (strain 86-028NP).